A 239-amino-acid chain; its full sequence is Fatty acid metabolism regulator protein (239 aa).

The 69-residue stretch at 6–74 folds into the HTH gntR-type domain; that stretch reads KGPASFAEKY…HGKPTRVNNF (69 aa). Residues 34–53 constitute a DNA-binding region (H-T-H motif); sequence ERELSELIGVTRTTLREVLQ.

Homodimer.

Its subcellular location is the cytoplasm. In terms of biological role, multifunctional regulator of fatty acid metabolism. This is Fatty acid metabolism regulator protein from Shewanella halifaxensis (strain HAW-EB4).